The following is a 3305-amino-acid chain: Apolipophorins (3305 aa).

The first 23 residues, 1-23 (MGKSNRLLSVLFVISVLWKAAYG), serve as a signal peptide directing secretion. The Vitellogenin domain occupies 39-640 (FAAGQKYNYG…SQTSFLPRSV (602 aa)). N-linked (GlcNAc...) asparagine glycans are attached at residues asparagine 643 and asparagine 2769. The 167-residue stretch at 2733–2899 (LRAVVVNGQH…NSYRLSRSCP (167 aa)) folds into the VWFD domain. Cysteine 2757 and cysteine 2898 form a disulfide bridge.

Post-translationally, cleaved into 2 chains by furin protease. However, prevention of cleavage does not impair its function. In terms of processing, N-glycosylated.

The protein localises to the secreted. Constitutes the major component of lipophorin, which mediates transport for various types of lipids in hemolymph. Acts by forming lipoprotein particles that bind lipoproteins and lipids. May be required for morphogens wingless (wg) and hedgehog (hh) function, possibly by acting as vehicles for the movement of wg and hh. This is Apolipophorins from Manduca sexta (Tobacco hawkmoth).